Consider the following 446-residue polypeptide: UDP-N-acetylmuramate--L-alanine ligase (446 aa).

Residue Gly-122–Thr-128 coordinates ATP.

Belongs to the MurCDEF family.

It is found in the cytoplasm. The enzyme catalyses UDP-N-acetyl-alpha-D-muramate + L-alanine + ATP = UDP-N-acetyl-alpha-D-muramoyl-L-alanine + ADP + phosphate + H(+). It functions in the pathway cell wall biogenesis; peptidoglycan biosynthesis. Cell wall formation. The protein is UDP-N-acetylmuramate--L-alanine ligase of Nocardioides sp. (strain ATCC BAA-499 / JS614).